Consider the following 70-residue polypeptide: Large ribosomal subunit protein eL38 (70 aa).

The protein belongs to the eukaryotic ribosomal protein eL38 family.

This Spodoptera frugiperda (Fall armyworm) protein is Large ribosomal subunit protein eL38 (RpL38).